The chain runs to 113 residues: Hydrogenase maturation factor HypA (113 aa).

His-2 provides a ligand contact to Ni(2+). Zn(2+) is bound by residues Cys-73, Cys-76, Cys-89, and Cys-92.

Belongs to the HypA/HybF family.

In terms of biological role, involved in the maturation of [NiFe] hydrogenases. Required for nickel insertion into the metal center of the hydrogenase. This chain is Hydrogenase maturation factor HypA, found in Rhodobacter capsulatus (Rhodopseudomonas capsulata).